A 300-amino-acid chain; its full sequence is Cell shape-determining protein MreC (300 aa).

Over 1–17 (MARDRTRPEDFTRPLRR) the chain is Cytoplasmic. A helical transmembrane segment spans residues 18 to 38 (ILVGGLVLLLLGIFLIWRIDS). Topologically, residues 39 to 300 (PRVEQFRAAL…APAAVEGADG (262 aa)) are periplasmic. The stretch at 74-117 (QSYTRIYEQNQELRRELQQMKAWKEAALQLEQKNARLLDLNQVR) forms a coiled coil. A disordered region spans residues 277–300 (SDPGKLVAEPPAPPAPAAVEGADG).

The protein belongs to the MreC family.

Its subcellular location is the cell inner membrane. Its function is as follows. Involved in formation and maintenance of cell shape. The chain is Cell shape-determining protein MreC from Cereibacter sphaeroides (Rhodobacter sphaeroides).